The sequence spans 1188 residues: Probable phosphoenolpyruvate synthase (1188 aa).

A DOD-type homing endonuclease domain is found at 536 to 670; sequence LGGAVLSDGH…LIVGLYRLGI (135 aa). His-824 functions as the Tele-phosphohistidine intermediate in the catalytic mechanism. Substrate contacts are provided by Arg-917, Arg-964, Glu-1061, Gly-1083, Thr-1084, Asn-1085, and Asp-1086. A Mg(2+)-binding site is contributed by Glu-1061. Asp-1086 is a Mg(2+) binding site. The active-site Proton donor is the Cys-1133.

This sequence belongs to the PEP-utilizing enzyme family. Requires Mg(2+) as cofactor. Post-translationally, this protein undergoes a protein self splicing that involves a post-translational excision of the intervening region (intein) followed by peptide ligation.

It carries out the reaction pyruvate + ATP + H2O = phosphoenolpyruvate + AMP + phosphate + 2 H(+). The protein operates within carbohydrate biosynthesis; gluconeogenesis. Catalyzes the phosphorylation of pyruvate to phosphoenolpyruvate. In Methanocaldococcus jannaschii (strain ATCC 43067 / DSM 2661 / JAL-1 / JCM 10045 / NBRC 100440) (Methanococcus jannaschii), this protein is Probable phosphoenolpyruvate synthase (ppsA).